The chain runs to 416 residues: MPMVTVKYNFQLFKCKVSLNSTLNDVLHQSIQFFQLHTSSNDWSLIHLDKPVPLDLPWRLLNLPTGVNLELSKSSNFPVANKTNREDIPFNTIKIRFQIPGRDSVVKEMPSDQPIAPILRQMSGAAGDDFKIQVFSKIIEFKTIKDENLTLENLGIQEPSSVRLIFNNTSHSEGISANSAIHPKQTPPTMTNPETVASLPPHELHKPSVFLPSDEPLAVIKDQIEDEEDYELTVEQAKKYQKMLSSKAGTLGGPILTKRLREQSANNLPKKNKAISECLLRVKFPDRSHIQIAFKPNEDMRTVYNVVSQFLIDENMPFTLNQSHPFKPLAKDDKKLLDDLEFGSKTMLLFETNSNSNGPLIKAHLLEDAQKITHETRTTPSVNTINKSNPQGPSDNATSIKKTLNRVPKWMKLSKK.

Positions 273-350 (KAISECLLRV…EFGSKTMLLF (78 aa)) constitute a UBX domain. The disordered stretch occupies residues 376-402 (TRTTPSVNTINKSNPQGPSDNATSIKK). The span at 378 to 402 (TTPSVNTINKSNPQGPSDNATSIKK) shows a compositional bias: polar residues.

It is found in the nucleus. The protein localises to the cytoplasm. Functionally, involved in CDC48-dependent protein degradation through the ubiquitin/proteasome pathway. The sequence is that of UBX domain-containing protein 4 (UBX4) from Saccharomyces cerevisiae (strain ATCC 204508 / S288c) (Baker's yeast).